Consider the following 108-residue polypeptide: Ig light chain C region (108 aa).

The Ig-like domain occupies 7 to 102 (PTVSIYCPSL…LTPALAKSFQ (96 aa)). Cystine bridges form between C13–C106 and C28–C86.

This is Ig light chain C region from Aquarana catesbeiana (American bullfrog).